Here is a 221-residue protein sequence, read N- to C-terminus: MVDLRYASGNIFDEKVHEMGIIALGSFLENHGSALPIDTDAKIASYIALNVSISTGAKFLGVVIPSTEYSYVKHGIHDSIEDVITYIKYLVENGRKIGINKFLIINCHGGNTIILDELSKLNSKDCFIKMESVCLTHASTEEVSLGYAVGILSEDNMKTHDPKIYEEIGMVGLKEAREKNEAIDLEAKSVEKNGVFLDKTHGKSLLNDLITNYVEIVRNMI.

Positions 29, 31, 40, and 108 each coordinate Fe cation.

The protein belongs to the creatininase superfamily. FAPy deformylase family. In terms of assembly, homodimer. It depends on Fe(2+) as a cofactor. Zn(2+) serves as cofactor.

The catalysed reaction is 2-amino-5-formylamino-6-(5-phospho-D-ribosylamino)pyrimidin-4(3H)-one + H2O = 2,5-diamino-6-(1-D-ribosylamino)pyrimidin-4(3H)-one 5'-phosphate + formate + H(+). It participates in cofactor biosynthesis; coenzyme F420 biosynthesis. The protein operates within cofactor biosynthesis; riboflavin biosynthesis. Its function is as follows. Catalyzes the hydrolysis of the formamide of 2-amino-5-formylamino-6-ribosylamino-4(3H)-pyrimidinone 5'-monophosphate (FAPy) to form 2,5-diamino-6-ribosylamino-4(3H)-pyrimidinone 5'-phosphate (APy). The chain is 2-amino-5-formylamino-6-ribosylaminopyrimidin-4(3H)-one 5'-monophosphate deformylase from Methanococcus maripaludis (strain C5 / ATCC BAA-1333).